Here is a 254-residue protein sequence, read N- to C-terminus: uncharacterized protein (254 aa).

A signal peptide spans M1 to G22. The N-palmitoyl cysteine moiety is linked to residue C23. C23 carries S-diacylglycerol cysteine lipidation.

It belongs to the staphylococcal tandem lipoprotein family.

It localises to the cell membrane. This is an uncharacterized protein from Staphylococcus aureus (strain MSSA476).